Consider the following 648-residue polypeptide: Serine/threonine-protein kinase DCLK3 (648 aa).

Disordered stretches follow at residues 86–127 (DDRA…HLGV) and 150–345 (QSLE…PRPM). 5 stretches are compositionally biased toward basic and acidic residues: residues 98 to 127 (GKWE…HLGV), 213 to 234 (ELRR…DQES), 255 to 266 (EGLREVKKDTRP), 277 to 303 (LREH…EKKP), and 312 to 338 (TLRD…ERPS). In terms of domain architecture, Protein kinase spans 356–613 (YETGRVIGDG…AHQVLQHPWI (258 aa)). ATP-binding positions include 362 to 370 (IGDGNFAVV) and Lys385. The active-site Proton acceptor is the Asp477. The disordered stretch occupies residues 628-648 (VSPSSEGHFRSQHKRVVEQVS).

The protein belongs to the protein kinase superfamily. CAMK Ser/Thr protein kinase family. CaMK subfamily.

The protein resides in the cytoplasm. It is found in the nucleus. It carries out the reaction L-seryl-[protein] + ATP = O-phospho-L-seryl-[protein] + ADP + H(+). The enzyme catalyses L-threonyl-[protein] + ATP = O-phospho-L-threonyl-[protein] + ADP + H(+). The protein is Serine/threonine-protein kinase DCLK3 (DCLK3) of Homo sapiens (Human).